A 123-amino-acid chain; its full sequence is PTS system glucitol/sorbitol-specific EIIA component (123 aa).

The region spanning 3–116 (VIYQTTITRI…PDDIAPGSVL (114 aa)) is the PTS EIIA type-5 domain. Histidine 43 functions as the Tele-phosphohistidine intermediate in the catalytic mechanism. A Phosphohistidine; by HPr modification is found at histidine 43.

It is found in the cytoplasm. In terms of biological role, the phosphoenolpyruvate-dependent sugar phosphotransferase system (sugar PTS), a major carbohydrate active transport system, catalyzes the phosphorylation of incoming sugar substrates concomitantly with their translocation across the cell membrane. The enzyme II complex composed of SrlA, SrlB and SrlE is involved in glucitol/sorbitol transport. It can also use D-mannitol. This is PTS system glucitol/sorbitol-specific EIIA component (srlB) from Escherichia coli (strain K12).